Consider the following 900-residue polypeptide: Chaperone protein ClpB 2 (900 aa).

In terms of domain architecture, Clp R spans 15 to 154; it reads PDRFSDPAWE…ESLLRQPSVS (140 aa). Repeat regions lie at residues 18–81 and 91–154; these read FSDP…LADQ and IGED…PSVS. The segment at 151–183 is disordered; the sequence is PSVSPAPAPPPVPTAASAPAPTPRSAPAPRVMA. Over residues 154-163 the composition is skewed to pro residues; it reads SPAPAPPPVP. The tract at residues 191–376 is NBD1; it reads ELEREPSALE…RRFQQVLIRE (186 aa). An ATP-binding site is contributed by 244–251; it reads GEPGVGKT. Positions 377 to 581 are linker; it reads PDLELSLEIL…IADLVARWTG (205 aa). Positions 427-557 form a coiled coil; sequence IDLIDEAAAQ…LEASQAEAQS (131 aa). The NBD2 stretch occupies residues 591–803; sequence ERRKLLALES…RIDEVIRFRP (213 aa). Residue 641-648 coordinates ATP; that stretch reads GPTGVGKT. Positions 804-900 are C-terminal; it reads LKVKDLVRIV…GASLEFEPLE (97 aa).

The protein belongs to the ClpA/ClpB family. Homohexamer. The oligomerization is ATP-dependent.

It localises to the cytoplasm. Its function is as follows. Part of a stress-induced multi-chaperone system, it is involved in the recovery of the cell from heat-induced damage, in cooperation with DnaK, DnaJ and GrpE. Acts before DnaK, in the processing of protein aggregates. Protein binding stimulates the ATPase activity; ATP hydrolysis unfolds the denatured protein aggregates, which probably helps expose new hydrophobic binding sites on the surface of ClpB-bound aggregates, contributing to the solubilization and refolding of denatured protein aggregates by DnaK. The chain is Chaperone protein ClpB 2 (clpB2) from Parasynechococcus marenigrum (strain WH8102).